The sequence spans 232 residues: Ureidoacrylate amidohydrolase RutB (232 aa).

Aspartate 26 (proton acceptor) is an active-site residue. Lysine 135 is an active-site residue. Cysteine 168 serves as the catalytic Nucleophile.

It belongs to the isochorismatase family. RutB subfamily.

The catalysed reaction is (Z)-3-ureidoacrylate + H2O + H(+) = (Z)-3-aminoacrylate + NH4(+) + CO2. It carries out the reaction (Z)-3-ureidoacrylate + H2O = (Z)-3-aminoacrylate + carbamate + H(+). The enzyme catalyses (Z)-2-methylureidoacrylate + H2O + H(+) = (Z)-2-methylaminoacrylate + NH4(+) + CO2. In terms of biological role, hydrolyzes ureidoacrylate to form aminoacrylate and carbamate. The carbamate hydrolyzes spontaneously, thereby releasing one of the nitrogen atoms of the pyrimidine ring as ammonia and one of its carbon atoms as CO2. This is Ureidoacrylate amidohydrolase RutB from Cronobacter sakazakii (strain ATCC BAA-894) (Enterobacter sakazakii).